We begin with the raw amino-acid sequence, 159 residues long: UPF0262 protein RD1_1069 (159 aa).

Belongs to the UPF0262 family.

This is UPF0262 protein RD1_1069 from Roseobacter denitrificans (strain ATCC 33942 / OCh 114) (Erythrobacter sp. (strain OCh 114)).